The sequence spans 494 residues: Cobyrinate a,c-diamide synthase (494 aa).

The GATase cobBQ-type domain occupies K270–E475. The active-site Nucleophile is C352.

Belongs to the CobB/CbiA family. Mg(2+) is required as a cofactor.

It catalyses the reaction cob(II)yrinate + 2 L-glutamine + 2 ATP + 2 H2O = cob(II)yrinate a,c diamide + 2 L-glutamate + 2 ADP + 2 phosphate + 2 H(+). The catalysed reaction is Ni-sirohydrochlorin + 2 L-glutamine + 2 ATP + 2 H2O = Ni-sirohydrochlorin a,c-diamide + 2 L-glutamate + 2 ADP + 2 phosphate + 2 H(+). Its pathway is cofactor biosynthesis; adenosylcobalamin biosynthesis; cob(II)yrinate a,c-diamide from sirohydrochlorin (anaerobic route): step 10/10. Functionally, catalyzes the ATP-dependent amidation of the two carboxylate groups at positions a and c of cobyrinate, using either L-glutamine or ammonia as the nitrogen source (Potential). Involved in the biosynthesis of the unique nickel-containing tetrapyrrole coenzyme F430, the prosthetic group of methyl-coenzyme M reductase (MCR), which plays a key role in methanogenesis and anaerobic methane oxidation. Catalyzes the ATP-dependent amidation of the two carboxylate groups at positions a and c of Ni-sirohydrochlorin, using L-glutamine or ammonia as the nitrogen source. Also able to use sirohydrochlorin as substrate, but only produces a monoamide species in a much slower reaction. Unable to use other metallosirohydrochlorins such as sirohaem and Co-sirohydrochlorin. This is Cobyrinate a,c-diamide synthase from Methanosarcina barkeri (strain Fusaro / DSM 804).